Reading from the N-terminus, the 628-residue chain is Dihydroxy-acid dehydratase (628 aa).

Asp80 provides a ligand contact to Mg(2+). Cys121 contributes to the [2Fe-2S] cluster binding site. 2 residues coordinate Mg(2+): Asp122 and Lys123. Residue Lys123 is modified to N6-carboxylysine. Cys207 provides a ligand contact to [2Fe-2S] cluster. Mg(2+) is bound at residue Glu503. Catalysis depends on Ser529, which acts as the Proton acceptor.

It belongs to the IlvD/Edd family. As to quaternary structure, homodimer. [2Fe-2S] cluster serves as cofactor. Requires Mg(2+) as cofactor.

It carries out the reaction (2R)-2,3-dihydroxy-3-methylbutanoate = 3-methyl-2-oxobutanoate + H2O. The catalysed reaction is (2R,3R)-2,3-dihydroxy-3-methylpentanoate = (S)-3-methyl-2-oxopentanoate + H2O. Its pathway is amino-acid biosynthesis; L-isoleucine biosynthesis; L-isoleucine from 2-oxobutanoate: step 3/4. The protein operates within amino-acid biosynthesis; L-valine biosynthesis; L-valine from pyruvate: step 3/4. Functionally, functions in the biosynthesis of branched-chain amino acids. Catalyzes the dehydration of (2R,3R)-2,3-dihydroxy-3-methylpentanoate (2,3-dihydroxy-3-methylvalerate) into 2-oxo-3-methylpentanoate (2-oxo-3-methylvalerate) and of (2R)-2,3-dihydroxy-3-methylbutanoate (2,3-dihydroxyisovalerate) into 2-oxo-3-methylbutanoate (2-oxoisovalerate), the penultimate precursor to L-isoleucine and L-valine, respectively. In Psychrobacter arcticus (strain DSM 17307 / VKM B-2377 / 273-4), this protein is Dihydroxy-acid dehydratase.